Here is a 181-residue protein sequence, read N- to C-terminus: MMKLKEFFINIISIFRSVYMVGMQAFSKRETYMYPDVACKLSSRYRGRIVLTRDSAGHERCVACNLCAVSCPVGCISLKKSENSEGRWYPEFFRINFSRCIFCGMCEEACPTAAIQLISDFEMSDYKRSDLVYEKSDLLISGPGKYKNYDFYQISGVKYSNKYKKESSFEEKPISVKTILP.

2 4Fe-4S ferredoxin-type domains span residues 52–81 (TRDS…LKKS) and 91–120 (EFFR…LISD). [4Fe-4S] cluster contacts are provided by Cys-61, Cys-64, Cys-67, Cys-71, Cys-100, Cys-103, Cys-106, and Cys-110.

It belongs to the complex I 23 kDa subunit family. NDH-1 is composed of 13 different subunits. Subunits NuoA, H, J, K, L, M, N constitute the membrane sector of the complex. [4Fe-4S] cluster is required as a cofactor.

The protein resides in the cell inner membrane. The enzyme catalyses a quinone + NADH + 5 H(+)(in) = a quinol + NAD(+) + 4 H(+)(out). In terms of biological role, NDH-1 shuttles electrons from NADH, via FMN and iron-sulfur (Fe-S) centers, to quinones in the respiratory chain. The immediate electron acceptor for the enzyme in this species is believed to be ubiquinone. Couples the redox reaction to proton translocation (for every two electrons transferred, four hydrogen ions are translocated across the cytoplasmic membrane), and thus conserves the redox energy in a proton gradient. This Blochmanniella floridana protein is NADH-quinone oxidoreductase subunit I.